The sequence spans 647 residues: Pollen receptor-like kinase 2 (647 aa).

The first 21 residues, methionine 1–glycine 21, serve as a signal peptide directing secretion. LRR repeat units follow at residues leucine 87–lysine 109, leucine 110–glycine 134, glycine 136–serine 159, lysine 161–proline 183, and methionine 185–threonine 203. A helical transmembrane segment spans residues isoleucine 248–phenylalanine 268. Residues lysine 338–methionine 613 enclose the Protein kinase domain. Serine 340 bears the Phosphoserine mark. ATP contacts are provided by residues leucine 344–serine 352 and lysine 366. Serine 418 carries the post-translational modification Phosphoserine. The residue at position 438 (threonine 438) is a Phosphothreonine. Tyrosine 508 is modified (phosphotyrosine). The interval aspartate 620–serine 647 is disordered. Polar residues predominate over residues arginine 637 to serine 647.

This sequence belongs to the protein kinase superfamily. Ser/Thr protein kinase family. As to quaternary structure, part of a complex containing ROPGEF1 and ARAC11/ROP1. The interaction between PRK2, ROPGEF1 and ARAC11/ROP1 is phosphorylation-independent. Interacts with ROPGEF12 (via C-terminus). Interacts with ROPGEF1 (via PRONE domain). Expressed in pollen and/or in flowers, but not in leaves. Expressed in pollen tube.

The protein resides in the cell membrane. The catalysed reaction is L-seryl-[protein] + ATP = O-phospho-L-seryl-[protein] + ADP + H(+). It catalyses the reaction L-threonyl-[protein] + ATP = O-phospho-L-threonyl-[protein] + ADP + H(+). With respect to regulation, the phosphorylation activity is calcium-independent. Receptor-like kinase involved in the control of pollen germination and pollen tube polar growth. Phosphorylates ROPGEF1 in its C-terminal region, releasing its auto-inhibition, and thereby activating the ROP1 signaling pathway. May act as a scaffolding protein, recruiting ROPGEF12 to the plasma membrane by binding to its C-terminal domain. Phosphorylates ROPGEF12, releasing its auto-inhibition. The chain is Pollen receptor-like kinase 2 from Arabidopsis thaliana (Mouse-ear cress).